We begin with the raw amino-acid sequence, 258 residues long: Ribosome maturation factor RimP (258 aa).

Disordered stretches follow at residues Pro-48 to Ala-88 and Ile-212 to Asp-258. Over residues Lys-215–Gly-224 the composition is skewed to basic residues.

Belongs to the RimP family.

The protein localises to the cytoplasm. Its function is as follows. Required for maturation of 30S ribosomal subunits. This is Ribosome maturation factor RimP from Desulfovibrio desulfuricans (strain ATCC 27774 / DSM 6949 / MB).